Consider the following 685-residue polypeptide: MGAPTLPRIIPPVAEKLAEARQRVEELREQIRYHNRKYYVEDAPEISDAEYDALYRELEELESRFPELVTPDSPTQRVGGEPLEEFEEVRHAVPMLSLQNARRVEELREWDARVRRLLGPEEEGRLRYVTELKIDGLAVSLRYENGRLVRGATRGNGFVGEDVTRQLRTIRSVPDRLDDDPPGVLEPRGEVYIKLKDFEEFNRRRQERGERPFANPRNLAAGSVRQLDPRVTARRPLTIYLYGVGEGYENFESHSEALAALRRYGLRVNPHTVHGDIDSVIEECGRWAKKREALDFQVDGVVVKVDSREQQERLGAVQKAPRWAIAYKFEPLAGRTRLRDIVVTVGRTGALTPQAVLEPVNVGGVTISRATLHNEDYIKEKGILIGDTVIVERAGDVIPQVVRPVPEERDGDEEEFRMPERCPVCGERVSRPEGEAITRCANVRCPAQALEHIIHWASRGAMDIEGLGEKLARKLFDLGLIRDVADLYELRAEQLAPLEGLGEKSAQNLIRAIERSKERPFDRVLFGLGIRHVGSATAELIAERFSGEELLRGVGVEELTQIEGVGEIVARAVVEYFSLEENRKLVRRLMEHGLNFGPVRGKPEEGPLSGRRLVITGTLSRPRSEISDLIEGAGGTVTSSVSRNTDYLVAGENPGSKLERARELGVPVLDEEGLRRLLSGEERPG.

Residues 48 to 52 (DAEYD), 97 to 98 (SL), and Glu-131 contribute to the NAD(+) site. The N6-AMP-lysine intermediate role is filled by Lys-133. NAD(+) is bound by residues Arg-154, Glu-190, Lys-304, and Lys-328. 4 residues coordinate Zn(2+): Cys-422, Cys-425, Cys-440, and Cys-445. The region spanning 603–685 (PEEGPLSGRR…RLLSGEERPG (83 aa)) is the BRCT domain.

Belongs to the NAD-dependent DNA ligase family. LigA subfamily. Requires Mg(2+) as cofactor. Mn(2+) is required as a cofactor.

The enzyme catalyses NAD(+) + (deoxyribonucleotide)n-3'-hydroxyl + 5'-phospho-(deoxyribonucleotide)m = (deoxyribonucleotide)n+m + AMP + beta-nicotinamide D-nucleotide.. Its function is as follows. DNA ligase that catalyzes the formation of phosphodiester linkages between 5'-phosphoryl and 3'-hydroxyl groups in double-stranded DNA using NAD as a coenzyme and as the energy source for the reaction. It is essential for DNA replication and repair of damaged DNA. This is DNA ligase from Rubrobacter xylanophilus (strain DSM 9941 / JCM 11954 / NBRC 16129 / PRD-1).